We begin with the raw amino-acid sequence, 257 residues long: Transmembrane protein 101 (257 aa).

8 consecutive transmembrane segments (helical) span residues 21–40 (VLLT…LYAE), 52–72 (VPYL…MSFG), 77–97 (WFAL…YIGG), 110–130 (YSRT…AGEL), 139–159 (SLQS…AYSL), 182–202 (LFFV…YVTL), 206–226 (ILAV…AYWH), and 233–253 (FWNQ…AVIL).

The protein localises to the membrane. Its function is as follows. May activate NF-kappa-B signaling pathways. The chain is Transmembrane protein 101 (TMEM101) from Pongo abelii (Sumatran orangutan).